The sequence spans 209 residues: Chaperone protein TorD (209 aa).

This sequence belongs to the TorD/DmsD family. TorD subfamily.

It is found in the cytoplasm. Functionally, involved in the biogenesis of TorA. Acts on TorA before the insertion of the molybdenum cofactor and, as a result, probably favors a conformation of the apoenzyme that is competent for acquiring the cofactor. This chain is Chaperone protein TorD, found in Shewanella baltica (strain OS155 / ATCC BAA-1091).